We begin with the raw amino-acid sequence, 209 residues long: MKNLVVVDHPLIKHKLTIMRDKNTGPKEFRELLKEITLLLAYEATRHLKCEEVEVETPITKTTGYRINDKDIVVVPILRAGLVMADGILELLPNASVGHIGIYRDPETLRAVEYYAKLPPLDGDKEVFLLDPMLATGVSSVKALDILKENGARKITLVALIAAPEGVEAVEEKHSDVKIYVAALDERLNDHGYIIPGLGDAGDRLFRTK.

Residues arginine 79, arginine 104, and 131–139 each bind 5-phospho-alpha-D-ribose 1-diphosphate; that span reads DPMLATGVS. Residues isoleucine 194 and 199-201 each bind uracil; that span reads GDA. A 5-phospho-alpha-D-ribose 1-diphosphate-binding site is contributed by aspartate 200.

This sequence belongs to the UPRTase family. It depends on Mg(2+) as a cofactor.

The enzyme catalyses UMP + diphosphate = 5-phospho-alpha-D-ribose 1-diphosphate + uracil. Its pathway is pyrimidine metabolism; UMP biosynthesis via salvage pathway; UMP from uracil: step 1/1. Its activity is regulated as follows. Allosterically activated by GTP. In terms of biological role, catalyzes the conversion of uracil and 5-phospho-alpha-D-ribose 1-diphosphate (PRPP) to UMP and diphosphate. The chain is Uracil phosphoribosyltransferase from Thermotoga neapolitana (strain ATCC 49049 / DSM 4359 / NBRC 107923 / NS-E).